The sequence spans 194 residues: Peptidyl-tRNA hydrolase (194 aa).

Tyrosine 16 is a tRNA binding site. The Proton acceptor role is filled by histidine 21. 3 residues coordinate tRNA: phenylalanine 67, asparagine 69, and asparagine 115.

The protein belongs to the PTH family. In terms of assembly, monomer.

It is found in the cytoplasm. It catalyses the reaction an N-acyl-L-alpha-aminoacyl-tRNA + H2O = an N-acyl-L-amino acid + a tRNA + H(+). Its function is as follows. Hydrolyzes ribosome-free peptidyl-tRNAs (with 1 or more amino acids incorporated), which drop off the ribosome during protein synthesis, or as a result of ribosome stalling. Catalyzes the release of premature peptidyl moieties from peptidyl-tRNA molecules trapped in stalled 50S ribosomal subunits, and thus maintains levels of free tRNAs and 50S ribosomes. This is Peptidyl-tRNA hydrolase from Salmonella paratyphi B (strain ATCC BAA-1250 / SPB7).